Here is a 398-residue protein sequence, read N- to C-terminus: 1-deoxy-D-xylulose 5-phosphate reductoisomerase (398 aa).

NADPH-binding residues include Thr10, Gly11, Ser12, Ile13, Lys37, Asn38, and Asn124. Lys125 provides a ligand contact to 1-deoxy-D-xylulose 5-phosphate. Glu126 is an NADPH binding site. Asp150 contributes to the Mn(2+) binding site. The 1-deoxy-D-xylulose 5-phosphate site is built by Ser151, Glu152, Ser186, and His209. Glu152 is a binding site for Mn(2+). Gly215 is a binding site for NADPH. Ser222, Asn227, Lys228, and Glu231 together coordinate 1-deoxy-D-xylulose 5-phosphate. Glu231 serves as a coordination point for Mn(2+).

This sequence belongs to the DXR family. As to quaternary structure, homodimer. Mg(2+) serves as cofactor. Mn(2+) is required as a cofactor.

It catalyses the reaction 2-C-methyl-D-erythritol 4-phosphate + NADP(+) = 1-deoxy-D-xylulose 5-phosphate + NADPH + H(+). Its pathway is isoprenoid biosynthesis; isopentenyl diphosphate biosynthesis via DXP pathway; isopentenyl diphosphate from 1-deoxy-D-xylulose 5-phosphate: step 1/6. In terms of biological role, catalyzes the NADPH-dependent rearrangement and reduction of 1-deoxy-D-xylulose-5-phosphate (DXP) to 2-C-methyl-D-erythritol 4-phosphate (MEP). This chain is 1-deoxy-D-xylulose 5-phosphate reductoisomerase, found in Buchnera aphidicola subsp. Acyrthosiphon pisum (strain 5A).